A 286-amino-acid polypeptide reads, in one-letter code: Probable 4-deoxy-4-formamido-L-arabinose-phosphoundecaprenol deformylase ArnD (286 aa).

One can recognise a NodB homology domain in the interval 1–248 (MGTKLGVPNL…IAINEGINFC (248 aa)).

Belongs to the polysaccharide deacetylase family. ArnD deformylase subfamily.

It catalyses the reaction 4-deoxy-4-formamido-alpha-L-arabinopyranosyl di-trans,octa-cis-undecaprenyl phosphate + H2O = 4-amino-4-deoxy-alpha-L-arabinopyranosyl di-trans,octa-cis-undecaprenyl phosphate + formate. The protein operates within glycolipid biosynthesis; 4-amino-4-deoxy-alpha-L-arabinose undecaprenyl phosphate biosynthesis; 4-amino-4-deoxy-alpha-L-arabinose undecaprenyl phosphate from UDP-4-deoxy-4-formamido-beta-L-arabinose and undecaprenyl phosphate: step 2/2. Its pathway is bacterial outer membrane biogenesis; lipopolysaccharide biosynthesis. In terms of biological role, catalyzes the deformylation of 4-deoxy-4-formamido-L-arabinose-phosphoundecaprenol to 4-amino-4-deoxy-L-arabinose-phosphoundecaprenol. The modified arabinose is attached to lipid A and is required for resistance to polymyxin and cationic antimicrobial peptides. The chain is Probable 4-deoxy-4-formamido-L-arabinose-phosphoundecaprenol deformylase ArnD from Wigglesworthia glossinidia brevipalpis.